The following is a 482-amino-acid chain: MKFIIKLFPEITIKSQSVRLRFIKILTGNIRNVLKHYDETLAVVRHWDNIEVRAKDENQRLTIRDALTRIPGIHHILEVEDVPFTDMHDIFEKALVQYRDQLEGKTFCVRVKRSGKHDFSSIDVERYVGGGLNQHIESARVKLTNPDVTVHLEVEDDRLLLIKGRYEGIGGFPIGTQEDVLSLISGGFDSGVSSYMLMRRGCRVHYCFFNLGGAAHEIGVRQVAHYLWNRFGSSHRVRFVAINFEPVVGEILEKIDDGQMGVILKRMMVRAASKVAERYGVQALVTGEALGQVSSQTLTNLRLIDNVSDTLILRPLISYDKEHIINLARQIGTEDFARTMPEYCGVISKSPTVKAVKSKIEAEEEKFDFSILDKVVEEANNVDIREIAQQTEQEVVEVETVNDCGPNDVILDIRSVDEQEDKPLKVEGIDVVSLPFYKLSTKFGDLDQNRTWLLWCERGVMSRLQALYLREQGFNNVKVYRP.

A THUMP domain is found at Leu61 to Arg165. ATP-binding positions include Leu183–Ile184, Lys265, Gly287, and Gln296. Cys344 and Cys456 are oxidised to a cystine. Residues Cys404–Pro482 enclose the Rhodanese domain. The active-site Cysteine persulfide intermediate is the Cys456.

The protein belongs to the ThiI family.

The protein localises to the cytoplasm. It carries out the reaction [ThiI sulfur-carrier protein]-S-sulfanyl-L-cysteine + a uridine in tRNA + 2 reduced [2Fe-2S]-[ferredoxin] + ATP + H(+) = [ThiI sulfur-carrier protein]-L-cysteine + a 4-thiouridine in tRNA + 2 oxidized [2Fe-2S]-[ferredoxin] + AMP + diphosphate. The catalysed reaction is [ThiS sulfur-carrier protein]-C-terminal Gly-Gly-AMP + S-sulfanyl-L-cysteinyl-[cysteine desulfurase] + AH2 = [ThiS sulfur-carrier protein]-C-terminal-Gly-aminoethanethioate + L-cysteinyl-[cysteine desulfurase] + A + AMP + 2 H(+). The protein operates within cofactor biosynthesis; thiamine diphosphate biosynthesis. Its function is as follows. Catalyzes the ATP-dependent transfer of a sulfur to tRNA to produce 4-thiouridine in position 8 of tRNAs, which functions as a near-UV photosensor. Also catalyzes the transfer of sulfur to the sulfur carrier protein ThiS, forming ThiS-thiocarboxylate. This is a step in the synthesis of thiazole, in the thiamine biosynthesis pathway. The sulfur is donated as persulfide by IscS. This Shigella dysenteriae serotype 1 (strain Sd197) protein is tRNA sulfurtransferase.